The following is a 469-amino-acid chain: 3-isopropylmalate dehydratase large subunit (469 aa).

Residues Cys347, Cys407, and Cys410 each coordinate [4Fe-4S] cluster.

This sequence belongs to the aconitase/IPM isomerase family. LeuC type 1 subfamily. Heterodimer of LeuC and LeuD. [4Fe-4S] cluster serves as cofactor.

It catalyses the reaction (2R,3S)-3-isopropylmalate = (2S)-2-isopropylmalate. The protein operates within amino-acid biosynthesis; L-leucine biosynthesis; L-leucine from 3-methyl-2-oxobutanoate: step 2/4. Catalyzes the isomerization between 2-isopropylmalate and 3-isopropylmalate, via the formation of 2-isopropylmaleate. The sequence is that of 3-isopropylmalate dehydratase large subunit from Proteus mirabilis (strain HI4320).